Here is a 523-residue protein sequence, read N- to C-terminus: Cyclin-dependent kinase 17 (523 aa).

The residue at position 9 (Ser9) is a Phosphoserine. The disordered stretch occupies residues 30-55; it reads TIEESSSKDNEPIVKNGRPPTSHSVH. Phosphoserine is present on residues Ser80, Ser92, and Ser105. Residues 103 to 123 are disordered; sequence MGSDGESDQASGTSSDEVQSP. Residues 110 to 123 show a composition bias toward polar residues; the sequence is DQASGTSSDEVQSP. Phosphoserine occurs at positions 137, 146, 165, and 180. A Protein kinase domain is found at 192–473; it reads YIKLEKLGEG…AEEAMKHVYF (282 aa). Residues 198–206 and Lys221 contribute to the ATP site; that span reads LGEGTYATV. Residue Asp313 is the Proton acceptor of the active site. Positions 501-523 are disordered; that stretch reads PGFRNSSYPETGHGKNRRQSMLF. The span at 514–523 shows a compositional bias: basic residues; it reads GKNRRQSMLF.

This sequence belongs to the protein kinase superfamily. CMGC Ser/Thr protein kinase family. CDC2/CDKX subfamily. As to quaternary structure, found in a complex containing CABLES1, CDK16 and TDRD7. Interacts with TDRD7.

It catalyses the reaction L-seryl-[protein] + ATP = O-phospho-L-seryl-[protein] + ADP + H(+). The catalysed reaction is L-threonyl-[protein] + ATP = O-phospho-L-threonyl-[protein] + ADP + H(+). May play a role in terminally differentiated neurons. Has a Ser/Thr-phosphorylating activity for histone H1. The polypeptide is Cyclin-dependent kinase 17 (Cdk17) (Mus musculus (Mouse)).